The chain runs to 289 residues: uncharacterized protein (289 aa).

Positions 2-62 constitute an HTH tetR-type domain; it reads NEKKERIIKT…SACEYYIGMS (61 aa). Positions 25–44 form a DNA-binding region, H-T-H motif; it reads TIQEIASECGISKGAFYLHF.

This is an uncharacterized protein from Bacillus subtilis (strain 168).